A 235-amino-acid chain; its full sequence is LIKEIKAAVTIPVMAKARIGHFVEAQILESIGVDYVDESEVLTPADEDHHINKHNFQIPFVCGLSIPRGAPPPAYRRGYAGHDTGPRVRKPSTGNVVEAVRHIRSVMGEIRLLRNMDDDEVFAYAKKISAAYDLVMQTKQLGRLPVVNFAAGGVATPADAALMMQLGCDGVFVGSGVFKSGDPAKRARAIVQAVTHYSDPDLLGRGEFGLGEAMVGIIVRMRRLRGTPIVLNEVI.

The Schiff-base intermediate with D-ribose 5-phosphate role is filled by lysine 16. Residue arginine 104 participates in D-glyceraldehyde 3-phosphate binding. Residues glycine 153 and 174 to 175 (GS) contribute to the D-ribose 5-phosphate site.

This sequence belongs to the PdxS/SNZ family.

It carries out the reaction aldehydo-D-ribose 5-phosphate + D-glyceraldehyde 3-phosphate + L-glutamine = pyridoxal 5'-phosphate + L-glutamate + phosphate + 3 H2O + H(+). Its pathway is cofactor biosynthesis; pyridoxal 5'-phosphate biosynthesis. Its function is as follows. Catalyzes the formation of pyridoxal 5'-phosphate from ribose 5-phosphate (RBP), glyceraldehyde 3-phosphate (G3P) and ammonia. The ammonia is provided by PDX2. Can also use ribulose 5-phosphate and dihydroxyacetone phosphate as substrates, resulting from enzyme-catalyzed isomerization of RBP and G3P, respectively. Also plays an indirect role in resistance to singlet oxygen-generating photosensitizers. The polypeptide is Probable pyridoxal 5'-phosphate synthase subunit PDX1 (Stellaria longipes (Longstalk starwort)).